A 303-amino-acid polypeptide reads, in one-letter code: Caspase-7 (303 aa).

Residues 1 to 27 form a disordered region; the sequence is MADDQNCAPELEKADPSGEDGVDAKPD. The residue at position 2 (alanine 2) is an N-acetylalanine. Residues 2–23 constitute a propeptide, N-terminally processed; the sequence is ADDQNCAPELEKADPSGEDGVD. Residues 10–27 show a composition bias toward basic and acidic residues; that stretch reads ELEKADPSGEDGVDAKPD. At serine 30 the chain carries Phosphoserine. The segment at 38–41 is exosite; sequence KKKK. The interval 76-87 is loop L1; sequence KNFDKVTGMDVR. Histidine 144 is a catalytic residue. At threonine 173 the chain carries Phosphothreonine. The active site involves cysteine 186. A loop L2 region spans residues 187 to 196; sequence RGTELDDGVQ. Positions 199 to 206 are excised as a propeptide; that stretch reads SGPINETD. The loop L3 stretch occupies residues 226-238; the sequence is VPGYYSWRNPGKG. Residue serine 239 is modified to Phosphoserine. Positions 274-288 are loop L4; it reads ESQCDDPCFNEKKQI.

It belongs to the peptidase C14A family. Heterotetramer that consists of two anti-parallel arranged heterodimers, each one formed by a 20 kDa (p20) and a 11 kDa (p11) subunit. Interacts with XIAP (via its second BIR domain); inhibiting CASP7 activity. Interacts with BIRC6/bruce. Interacts with ATXN3 (short isoform 1). Interacts with HSPA5. In terms of processing, cleavage by different proteases, such as granzyme B (GZMB), caspase-1 (CASP1), caspase-8 (CASP8) or caspase-9 (CASP9) generate the two active subunits. Its involvement in different programmed cell death processes is probably specified by the protease that activates CASP7. Cleaved and activated by initiator caspases (CASP8 and/or CASP9), leading to execution phase of apoptosis. Cleavage and maturation by GZMB regulates granzyme-mediated programmed cell death. Cleaved and activated by CASP1 in response to bacterial infection. Propeptide domains can also be cleaved efficiently by CASP3. Active heterodimers between the small subunit of caspase-7 and the large subunit of CASP3, and vice versa, also occur. Also cleaved at the N-terminus at alternative sites by CAPN1, leading to its activation. Post-translationally, phosphorylation at Ser-30 and Ser-239 by PAK2 inhibits its activity. Phosphorylation at Ser-30 prevents cleavage and activation by initiator caspase CASP9, while phosphorylation at Ser-239 prevents thiol protease activity by preventing substrate-binding. Ubiquitinated by BIRC6; this activity is inhibited by DIABLO/SMAC.

It localises to the cytoplasm. Its subcellular location is the cytosol. The protein localises to the nucleus. The protein resides in the secreted. It is found in the extracellular space. It catalyses the reaction Strict requirement for an Asp residue at position P1 and has a preferred cleavage sequence of Asp-Glu-Val-Asp-|-.. Its activity is regulated as follows. During activation, the N-terminal disordered prodomain is removed by cleavage. Concomitantly, double cleavage gives rise to a large Caspase-7 subunit p20 and a small Caspase-7 subunit p11. The two large and two small subunits then assemble to form the active CASP7 complex. Can be cleaved and activated by different caspases, depending on the context. Cleaved and activated by initiator caspases (CASP8 and/or CASP9), leading to execution phase of apoptosis. Cleavage and maturation by GZMB regulates granzyme-mediated programmed cell death. Cleavage and maturation by CASP1 regulates pyroptosis. Inhibited by XIAP, which directly binds to the active site pocket and obstructs substrate entry. Phosphorylation at Ser-30 and Ser-239 by PAK2 inhibits its activity. Inhibited by BIRC6; following inhibition of BIRC6-caspase binding by DIABLO/SMAC, BIRC6 is subjected to caspase cleavage, leading to an increase in active caspases. In terms of biological role, thiol protease involved in different programmed cell death processes, such as apoptosis, pyroptosis or granzyme-mediated programmed cell death, by proteolytically cleaving target proteins. Has a marked preference for Asp-Glu-Val-Asp (DEVD) consensus sequences, with some plasticity for alternate non-canonical sequences. Its involvement in the different programmed cell death processes is probably determined by upstream proteases that activate CASP7. Acts as an effector caspase involved in the execution phase of apoptosis: following cleavage and activation by initiator caspases (CASP8 and/or CASP9), mediates execution of apoptosis by catalyzing cleavage of proteins, such as CLSPN, PARP1, PTGES3 and YY1. Compared to CASP3, acts as a minor executioner caspase and cleaves a limited set of target proteins. Acts as a key regulator of the inflammatory response in response to bacterial infection by catalyzing cleavage and activation of the sphingomyelin phosphodiesterase SMPD1 in the extracellular milieu, thereby promoting membrane repair. Regulates pyroptosis in intestinal epithelial cells: cleaved and activated by CASP1 in response to S.typhimurium infection, promoting its secretion to the extracellular milieu, where it catalyzes activation of SMPD1, generating ceramides that repair membranes and counteract the action of gasdermin-D (GSDMD) pores. Regulates granzyme-mediated programmed cell death in hepatocytes: cleaved and activated by granzyme B (GZMB) in response to bacterial infection, promoting its secretion to the extracellular milieu, where it catalyzes activation of SMPD1, generating ceramides that repair membranes and counteract the action of perforin (PRF1) pores. Following cleavage by CASP1 in response to inflammasome activation, catalyzes processing and inactivation of PARP1, alleviating the transcription repressor activity of PARP1. Acts as an inhibitor of type I interferon production during virus-induced apoptosis by mediating cleavage of antiviral proteins CGAS, IRF3 and MAVS, thereby preventing cytokine overproduction. Cleaves and activates sterol regulatory element binding proteins (SREBPs). Cleaves phospholipid scramblase proteins XKR4, XKR8 and XKR9. Cleaves BIRC6 following inhibition of BIRC6-caspase binding by DIABLO/SMAC. This chain is Caspase-7 (CASP7), found in Mesocricetus auratus (Golden hamster).